The sequence spans 354 residues: mRNA cap guanine-N(7) methyltransferase 2 (354 aa).

Residues 8-286 (KPEQSHHRLF…LYATFIFQKP (279 aa)) enclose the mRNA cap 0 methyltransferase domain. S-adenosyl-L-methionine-binding positions include Lys21, Asp61, and 88-89 (DP).

The protein belongs to the class I-like SAM-binding methyltransferase superfamily. mRNA cap 0 methyltransferase family.

The protein localises to the nucleus. It carries out the reaction a 5'-end (5'-triphosphoguanosine)-ribonucleoside in mRNA + S-adenosyl-L-methionine = a 5'-end (N(7)-methyl 5'-triphosphoguanosine)-ribonucleoside in mRNA + S-adenosyl-L-homocysteine. In terms of biological role, mRNA capping methyltransferase that methylates the N7 position of the added guanosine to the 5'-cap structure of mRNAs. Binds RNA containing 5'-terminal GpppC. This Arabidopsis thaliana (Mouse-ear cress) protein is mRNA cap guanine-N(7) methyltransferase 2.